Consider the following 417-residue polypeptide: Phosphoglycerate kinase (417 aa).

(2R)-3-phosphoglycerate is bound by residues Val-23, Asp-24, Phe-25, Asn-26, Gln-39, Arg-40, Ser-63, His-64, Gly-66, Arg-67, Leu-122, Arg-123, His-170, and Arg-171. Gly-214 is a binding site for ADP. Gly-214 serves as a coordination point for CDP. Residues Ala-215 and Lys-216 each contribute to the AMP site. Residue Ala-215 participates in ATP binding. Residue Ala-215 coordinates Mg(2+). Asp-219 lines the CDP pocket. Asp-219 is a binding site for Mg(2+). Residue Lys-220 participates in AMP binding. Lys-220 serves as a coordination point for ATP. Gly-238 contacts ADP. Position 238 (Gly-238) interacts with CDP. AMP is bound by residues Ala-239 and Gly-313. Residues Ala-239 and Gly-313 each coordinate ATP. CDP contacts are provided by Gly-338 and Phe-343. Phe-343 is an ADP binding site. AMP is bound at residue Glu-344. The ATP site is built by Glu-344, Asp-375, and Thr-376. Asp-375 is a binding site for Mg(2+).

The protein belongs to the phosphoglycerate kinase family. In terms of assembly, monomer. It depends on Mg(2+) as a cofactor.

The protein resides in the cytoplasm. Its subcellular location is the mitochondrion. The enzyme catalyses (2R)-3-phosphoglycerate + ATP = (2R)-3-phospho-glyceroyl phosphate + ADP. The protein operates within carbohydrate degradation; glycolysis; pyruvate from D-glyceraldehyde 3-phosphate: step 2/5. Functionally, catalyzes one of the two ATP producing reactions in the glycolytic pathway via the reversible conversion of 1,3-diphosphoglycerate to 3-phosphoglycerate. Both L- and D- forms of purine and pyrimidine nucleotides can be used as substrates, but the activity is much lower on pyrimidines. Negatively regulates the biosynthesis of acetyl-CoA from pyruvate in the mitochondrion. The polypeptide is Phosphoglycerate kinase (pgkA) (Aspergillus oryzae (strain ATCC 42149 / RIB 40) (Yellow koji mold)).